The chain runs to 125 residues: Aspartate 1-decarboxylase (125 aa).

Ser-25 (schiff-base intermediate with substrate; via pyruvic acid) is an active-site residue. Residue Ser-25 is modified to Pyruvic acid (Ser). Thr-57 is a binding site for substrate. The active-site Proton donor is the Tyr-58. Position 71–73 (71–73 (GAA)) interacts with substrate.

Belongs to the PanD family. As to quaternary structure, heterooctamer of four alpha and four beta subunits. Requires pyruvate as cofactor. Post-translationally, is synthesized initially as an inactive proenzyme, which is activated by self-cleavage at a specific serine bond to produce a beta-subunit with a hydroxyl group at its C-terminus and an alpha-subunit with a pyruvoyl group at its N-terminus.

The protein resides in the cytoplasm. It carries out the reaction L-aspartate + H(+) = beta-alanine + CO2. The protein operates within cofactor biosynthesis; (R)-pantothenate biosynthesis; beta-alanine from L-aspartate: step 1/1. Its function is as follows. Catalyzes the pyruvoyl-dependent decarboxylation of aspartate to produce beta-alanine. The chain is Aspartate 1-decarboxylase from Hydrogenobaculum sp. (strain Y04AAS1).